The primary structure comprises 464 residues: Bifunctional protein GlmU (464 aa).

Positions 1–232 (MKHDELAAVI…ADEAMGINDR (232 aa)) are pyrophosphorylase. Residues 11-14 (LAAG), Lys-25, Gln-76, and 81-82 (GT) each bind UDP-N-acetyl-alpha-D-glucosamine. Asp-106 contacts Mg(2+). Gly-143, Glu-157, Asn-172, and Asn-230 together coordinate UDP-N-acetyl-alpha-D-glucosamine. Asn-230 is a Mg(2+) binding site. Residues 233 to 253 (VQLAQASALMRRRINENLMRA) form a linker region. The tract at residues 254 to 464 (GVSFIDPEQT…RHDPKCKNKD (211 aa)) is N-acetyltransferase. Residues Arg-336 and Lys-354 each contribute to the UDP-N-acetyl-alpha-D-glucosamine site. His-366 acts as the Proton acceptor in catalysis. UDP-N-acetyl-alpha-D-glucosamine is bound by residues Tyr-369 and Asn-380. Acetyl-CoA-binding positions include 389-390 (NY), Ser-408, Ala-426, and Arg-443.

In the N-terminal section; belongs to the N-acetylglucosamine-1-phosphate uridyltransferase family. This sequence in the C-terminal section; belongs to the transferase hexapeptide repeat family. In terms of assembly, homotrimer. The cofactor is Mg(2+).

Its subcellular location is the cytoplasm. It carries out the reaction alpha-D-glucosamine 1-phosphate + acetyl-CoA = N-acetyl-alpha-D-glucosamine 1-phosphate + CoA + H(+). The enzyme catalyses N-acetyl-alpha-D-glucosamine 1-phosphate + UTP + H(+) = UDP-N-acetyl-alpha-D-glucosamine + diphosphate. Its pathway is nucleotide-sugar biosynthesis; UDP-N-acetyl-alpha-D-glucosamine biosynthesis; N-acetyl-alpha-D-glucosamine 1-phosphate from alpha-D-glucosamine 6-phosphate (route II): step 2/2. It participates in nucleotide-sugar biosynthesis; UDP-N-acetyl-alpha-D-glucosamine biosynthesis; UDP-N-acetyl-alpha-D-glucosamine from N-acetyl-alpha-D-glucosamine 1-phosphate: step 1/1. The protein operates within bacterial outer membrane biogenesis; LPS lipid A biosynthesis. In terms of biological role, catalyzes the last two sequential reactions in the de novo biosynthetic pathway for UDP-N-acetylglucosamine (UDP-GlcNAc). The C-terminal domain catalyzes the transfer of acetyl group from acetyl coenzyme A to glucosamine-1-phosphate (GlcN-1-P) to produce N-acetylglucosamine-1-phosphate (GlcNAc-1-P), which is converted into UDP-GlcNAc by the transfer of uridine 5-monophosphate (from uridine 5-triphosphate), a reaction catalyzed by the N-terminal domain. This chain is Bifunctional protein GlmU, found in Syntrophotalea carbinolica (strain DSM 2380 / NBRC 103641 / GraBd1) (Pelobacter carbinolicus).